The sequence spans 217 residues: Protein-L-isoaspartate O-methyltransferase (217 aa).

Residue serine 64 is part of the active site.

This sequence belongs to the methyltransferase superfamily. L-isoaspartyl/D-aspartyl protein methyltransferase family.

It localises to the cytoplasm. The catalysed reaction is [protein]-L-isoaspartate + S-adenosyl-L-methionine = [protein]-L-isoaspartate alpha-methyl ester + S-adenosyl-L-homocysteine. Its function is as follows. Catalyzes the methyl esterification of L-isoaspartyl residues in peptides and proteins that result from spontaneous decomposition of normal L-aspartyl and L-asparaginyl residues. It plays a role in the repair and/or degradation of damaged proteins. This chain is Protein-L-isoaspartate O-methyltransferase, found in Nitrobacter winogradskyi (strain ATCC 25391 / DSM 10237 / CIP 104748 / NCIMB 11846 / Nb-255).